The sequence spans 218 residues: Thiopurine S-methyltransferase (218 aa).

S-adenosyl-L-methionine contacts are provided by Trp-10, Leu-45, Glu-66, and Arg-123.

This sequence belongs to the class I-like SAM-binding methyltransferase superfamily. TPMT family.

The protein localises to the cytoplasm. It catalyses the reaction S-adenosyl-L-methionine + a thiopurine = S-adenosyl-L-homocysteine + a thiopurine S-methylether.. This Shewanella loihica (strain ATCC BAA-1088 / PV-4) protein is Thiopurine S-methyltransferase.